Here is a 318-residue protein sequence, read N- to C-terminus: MKHAENEYLNLCRHVMEHGTKKEDRTGTGTVSVFGYQMRFDLSKGFPLLTTKRVPFRLVASELLWFMKGDTNIRYLLQHNNNIWNEWAFKSWVESDEYTGPDMTDFGLRSQQDEEFKVQYDEQMELFKKNVLEDDDFSNKYGYLGDVYGKQWRAWKTTAGETLDQLKDVIEMIKKTPDSRRLIVSAWNPEDVPSMALPPCHTLFQFYVADGKLSCQLYQRSGDIFLGIPFNIASYSLLTHLIAHECGLEVGEFVHTIGDAHIYTNHFEQVEKQLAREPRPFPKLTLNPDVKSVFDFEMEDLTIEGYDPHPAIKAPVAV.

Residues arginine 25 and 180 to 181 (RR) contribute to the dUMP site. Cysteine 200 acts as the Nucleophile in catalysis. DUMP is bound by residues 220-223 (RSGD), asparagine 231, and 261-263 (HIY). A (6R)-5,10-methylene-5,6,7,8-tetrahydrofolate-binding site is contributed by aspartate 223. Alanine 317 is a (6R)-5,10-methylene-5,6,7,8-tetrahydrofolate binding site.

The protein belongs to the thymidylate synthase family. Bacterial-type ThyA subfamily. In terms of assembly, homodimer.

It localises to the cytoplasm. The enzyme catalyses dUMP + (6R)-5,10-methylene-5,6,7,8-tetrahydrofolate = 7,8-dihydrofolate + dTMP. It functions in the pathway pyrimidine metabolism; dTTP biosynthesis. Its function is as follows. Catalyzes the reductive methylation of 2'-deoxyuridine-5'-monophosphate (dUMP) to 2'-deoxythymidine-5'-monophosphate (dTMP) while utilizing 5,10-methylenetetrahydrofolate (mTHF) as the methyl donor and reductant in the reaction, yielding dihydrofolate (DHF) as a by-product. This enzymatic reaction provides an intracellular de novo source of dTMP, an essential precursor for DNA biosynthesis. The chain is Thymidylate synthase from Bacillus cereus (strain ATCC 10987 / NRS 248).